The sequence spans 248 residues: Triosephosphate isomerase (248 aa).

Residue 9 to 11 participates in substrate binding; that stretch reads NWK. The active-site Electrophile is the H94. Catalysis depends on E166, which acts as the Proton acceptor. Substrate-binding positions include G172, S212, and 233–234; that span reads GG.

The protein belongs to the triosephosphate isomerase family. Homodimer.

The protein resides in the cytoplasm. The catalysed reaction is D-glyceraldehyde 3-phosphate = dihydroxyacetone phosphate. It participates in carbohydrate biosynthesis; gluconeogenesis. The protein operates within carbohydrate degradation; glycolysis; D-glyceraldehyde 3-phosphate from glycerone phosphate: step 1/1. Involved in the gluconeogenesis. Catalyzes stereospecifically the conversion of dihydroxyacetone phosphate (DHAP) to D-glyceraldehyde-3-phosphate (G3P). In Clostridium botulinum (strain Okra / Type B1), this protein is Triosephosphate isomerase.